A 434-amino-acid polypeptide reads, in one-letter code: Putative B3 domain-containing protein Os04g0347400 (434 aa).

3 DNA-binding regions (TF-B3) span residues 27–124 (SFHK…FDTT), 150–246 (KPQF…FGIN), and 326–432 (WIKK…DRVE).

It is found in the nucleus. The polypeptide is Putative B3 domain-containing protein Os04g0347400 (Oryza sativa subsp. japonica (Rice)).